The chain runs to 256 residues: Methylesterase 9 (256 aa).

Catalysis depends on S78, which acts as the Acyl-ester intermediate. Residues D206 and H234 each act as charge relay system in the active site.

Belongs to the AB hydrolase superfamily. Methylesterase family.

It carries out the reaction methyl (indol-3-yl)acetate + H2O = (indol-3-yl)acetate + methanol + H(+). The catalysed reaction is methyl (-)-jasmonate + H2O = jasmonate + methanol + H(+). It catalyses the reaction methyl salicylate + H2O = salicylate + methanol + H(+). It functions in the pathway plant hormone biosynthesis. It participates in lipid metabolism; oxylipin biosynthesis. With respect to regulation, esterase activity is down-regulated by salicylic acid (SA). Its function is as follows. Methylesterase shown to have carboxylesterase activity, methyl indole-3-acetic acid (MeIAA) esterase activity, methyl salicylate (MeSA) esterase activity and methyl jasmonate (MeJA) esterase activity in vitro. Required to convert methyl salicylate (MeSA) to salicylic acid (SA) as part of the signal transduction pathways that activate systemic acquired resistance in systemic tissue. MeSA is believed to be an inactive form that needs to be demethylated to exert a biological effect. The protein is Methylesterase 9 of Arabidopsis thaliana (Mouse-ear cress).